A 345-amino-acid chain; its full sequence is S-adenosylmethionine:tRNA ribosyltransferase-isomerase (345 aa).

The protein belongs to the QueA family. Monomer.

The protein resides in the cytoplasm. The enzyme catalyses 7-aminomethyl-7-carbaguanosine(34) in tRNA + S-adenosyl-L-methionine = epoxyqueuosine(34) in tRNA + adenine + L-methionine + 2 H(+). The protein operates within tRNA modification; tRNA-queuosine biosynthesis. In terms of biological role, transfers and isomerizes the ribose moiety from AdoMet to the 7-aminomethyl group of 7-deazaguanine (preQ1-tRNA) to give epoxyqueuosine (oQ-tRNA). The sequence is that of S-adenosylmethionine:tRNA ribosyltransferase-isomerase from Helicobacter acinonychis (strain Sheeba).